We begin with the raw amino-acid sequence, 55 residues long: MPQLNPNPWFYIMLMSWLTFSLIIQPKLLSFTSANPPSNKTSTTTRTLPWTWPWT.

A helical transmembrane segment spans residues 7–24 (NPWFYIMLMSWLTFSLII). The segment at 35-55 (NPPSNKTSTTTRTLPWTWPWT) is disordered. Residues 41–55 (TSTTTRTLPWTWPWT) are compositionally biased toward low complexity.

The protein belongs to the ATPase protein 8 family. In terms of assembly, component of the ATP synthase complex composed at least of ATP5F1A/subunit alpha, ATP5F1B/subunit beta, ATP5MC1/subunit c (homooctomer), MT-ATP6/subunit a, MT-ATP8/subunit 8, ATP5ME/subunit e, ATP5MF/subunit f, ATP5MG/subunit g, ATP5MK/subunit k, ATP5MJ/subunit j, ATP5F1C/subunit gamma, ATP5F1D/subunit delta, ATP5F1E/subunit epsilon, ATP5PF/subunit F6, ATP5PB/subunit b, ATP5PD/subunit d, ATP5PO/subunit OSCP. ATP synthase complex consists of a soluble F(1) head domain (subunits alpha(3) and beta(3)) - the catalytic core - and a membrane F(0) domain - the membrane proton channel (subunits c, a, 8, e, f, g, k and j). These two domains are linked by a central stalk (subunits gamma, delta, and epsilon) rotating inside the F1 region and a stationary peripheral stalk (subunits F6, b, d, and OSCP).

The protein localises to the mitochondrion membrane. Subunit 8, of the mitochondrial membrane ATP synthase complex (F(1)F(0) ATP synthase or Complex V) that produces ATP from ADP in the presence of a proton gradient across the membrane which is generated by electron transport complexes of the respiratory chain. ATP synthase complex consist of a soluble F(1) head domain - the catalytic core - and a membrane F(1) domain - the membrane proton channel. These two domains are linked by a central stalk rotating inside the F(1) region and a stationary peripheral stalk. During catalysis, ATP synthesis in the catalytic domain of F(1) is coupled via a rotary mechanism of the central stalk subunits to proton translocation. In vivo, can only synthesize ATP although its ATP hydrolase activity can be activated artificially in vitro. Part of the complex F(0) domain. The polypeptide is ATP synthase F(0) complex subunit 8 (Corythaixoides concolor (Grey go-away-bird)).